Here is a 341-residue protein sequence, read N- to C-terminus: Nucleoid-associated protein Sden_2335 (341 aa).

This sequence belongs to the YejK family.

The protein resides in the cytoplasm. It localises to the nucleoid. This is Nucleoid-associated protein Sden_2335 from Shewanella denitrificans (strain OS217 / ATCC BAA-1090 / DSM 15013).